The sequence spans 100 residues: Urease subunit gamma (100 aa).

Belongs to the urease gamma subunit family. In terms of assembly, heterotrimer of UreA (gamma), UreB (beta) and UreC (alpha) subunits. Three heterotrimers associate to form the active enzyme.

It localises to the cytoplasm. The catalysed reaction is urea + 2 H2O + H(+) = hydrogencarbonate + 2 NH4(+). The protein operates within nitrogen metabolism; urea degradation; CO(2) and NH(3) from urea (urease route): step 1/1. In Rhizobium meliloti (strain 1021) (Ensifer meliloti), this protein is Urease subunit gamma.